The chain runs to 54 residues: Large ribosomal subunit protein bL33A (54 aa).

The protein belongs to the bacterial ribosomal protein bL33 family.

This Mycobacterium bovis (strain ATCC BAA-935 / AF2122/97) protein is Large ribosomal subunit protein bL33A (rpmG1).